The following is a 751-amino-acid chain: MTINLPEKEAKRVQIAVDRNPVETSFQKWAKPGHFSRTLAKGPNTTTWIWNLHADAHDFDSHTSDLQDISRKVFSAHFGQLGIILIWLSGMYFHGARFSNYEAWLSDPTHIKPSAQIVWPIVGQEILNGDVGGGFQGVQITSGFFQLWRASGITSELQLYTTAVVGLVLAGAMFFAGWFHYHKAAPKLEWFQNVESMLNHHLGGLLGLGSLGWAGHQIHVSLPVNKLLDAGVDPKEIPLPHEFFLNKQLMIDLYPSFAKGLTPFFTLQWSEYSDFLTFKGGLNEVTGGLNLSDTAHHHLAIAVLFLIAGHMYRTNWGIGHSIKEILDAHKGPLTGEGHKGLYEILTTSWHAQLAINLALFGSLSIVVAHHMYSMPPYPYLATDYATQLSLFTHHCWIGGFCIVGAGAHAAIFMVRDYDPTNNYNNLLDRVLRHRDAIISHLNWVSIFLGFHSFGLYIHNDTMSALGRPQDMFSDTAIQLQPVFAQWVQNTHFMAPQLTAPNALAATSATWGGDVVAVGGKVAMMPISLGTADFMVHHIHAFTIHVTVLILLKGVLFARSSRLIPDKANLGFRFPCDGPGRGGTCQVSAWDHVFLGLFWMYNSLSIVIFHFSWKMQSDVFGTVVNNTVSHITAGNFAQSANTINGWLRDFLWSQSSQVIQSYGSALSAYGLIFLGAHFILLTGMLDIFSGRGYWQELIESILWSHAKLKVAPTIQPRALSITQGRAVGVAHYLLGGIATTWSFFLARIIAVG.

8 helical membrane passes run 73–96 (VFSA…FHGA), 159–182 (LYTT…FHYH), 198–222 (LNHH…HVSL), 294–312 (TAHH…GHMY), 349–372 (WHAQ…HHMY), 388–414 (LSLF…IFMV), 436–458 (AIIS…LYIH), and 533–551 (FMVH…LILL). 2 residues coordinate [4Fe-4S] cluster: Cys575 and Cys584. The next 2 helical transmembrane spans lie at 591 to 612 (HVFL…HFSW) and 665 to 687 (LSAY…LDIF). His676 provides a ligand contact to chlorophyll a'. Met683 and Tyr692 together coordinate chlorophyll a. Residue Trp693 coordinates phylloquinone. Residues 725 to 745 (AVGVAHYLLGGIATTWSFFLA) traverse the membrane as a helical segment.

The protein belongs to the PsaA/PsaB family. The PsaA/B heterodimer binds the P700 chlorophyll special pair and subsequent electron acceptors. PSI consists of a core antenna complex that captures photons, and an electron transfer chain that converts photonic excitation into a charge separation. The eukaryotic PSI reaction center is composed of at least 11 subunits. Requires P700 is a chlorophyll a/chlorophyll a' dimer, A0 is one or more chlorophyll a, A1 is one or both phylloquinones and FX is a shared 4Fe-4S iron-sulfur center. as cofactor.

The protein resides in the plastid. The protein localises to the chloroplast thylakoid membrane. The catalysed reaction is reduced [plastocyanin] + hnu + oxidized [2Fe-2S]-[ferredoxin] = oxidized [plastocyanin] + reduced [2Fe-2S]-[ferredoxin]. Its function is as follows. PsaA and PsaB bind P700, the primary electron donor of photosystem I (PSI), as well as the electron acceptors A0, A1 and FX. PSI is a plastocyanin/cytochrome c6-ferredoxin oxidoreductase, converting photonic excitation into a charge separation, which transfers an electron from the donor P700 chlorophyll pair to the spectroscopically characterized acceptors A0, A1, FX, FA and FB in turn. Oxidized P700 is reduced on the lumenal side of the thylakoid membrane by plastocyanin or cytochrome c6. In Stigeoclonium helveticum (Green alga), this protein is Photosystem I P700 chlorophyll a apoprotein A1.